Here is a 484-residue protein sequence, read N- to C-terminus: MADFVASLNAVLWSTPVIYILLGIGFAFSIMTRFLQVRHLKEMIVQMFKGKSSEAGVSSFQALSIALSGRVGTGNIAGVATAIAFGGPGAVFWMWAIAFIGAASAFVESTLAQIYKVKQDGQYRGGPAYYIEKGLGIKWFAVLFAAAALIAMAFLMPGVQSNSIAAGIQNAFGISPFVTGCGLVLLLGFIIFGGVKRIANAAQMIVPFMAIGYILLSLIIIVMNVSELPAVISLIFKSAFALDSAFGGLIGMAISWGVKRGIYSNEAGQGTGPHPAAAAEVSHPVKQGLVQAFSVYIDTLFVCSATAFMILFTGMYNTQAADGSFIVHQLKGVEAGPGFTQAAIDSVLPGFGAGFVAIALFFFAFTTIMAYYYIAETNIAYLARGRESKWAMLGLKLIILAATFYGTVKTASLAWALGDAGLGIMVWLNVIAIVLLAKPALLALKDYERQKKQGLDPIFDPKALGIKNADFWEKEYTHESERVS.

The next 11 membrane-spanning stretches (helical) occupy residues 11 to 31 (VLWS…FSIM), 66 to 88 (ALSG…FGGP), 92 to 114 (FWMW…LAQI), 139 to 159 (WFAV…MPGV), 172 to 192 (FGIS…FIIF), 205 to 225 (IVPF…VMNV), 238 to 258 (SAFA…SWGV), 292 to 312 (AFSV…MILF), 350 to 370 (GFGA…TIMA), 390 to 410 (WAML…TVKT), and 416 to 436 (ALGD…IVLL).

The protein belongs to the alanine or glycine:cation symporter (AGCS) (TC 2.A.25) family.

The protein resides in the cell membrane. The chain is Putative sodium/proton-dependent alanine carrier protein YrbD (yrbD) from Bacillus subtilis (strain 168).